The following is a 576-amino-acid chain: Potassium-transporting ATPase potassium-binding subunit (576 aa).

The next 12 helical transmembrane spans lie at 4–24, 65–85, 136–156, 179–199, 257–277, 288–308, 341–361, 371–391, 393–413, 430–450, 497–517, and 540–560; these read QAWI…WPLG, AYAL…YALQ, ALGV…FALI, VYVL…QGVI, LSNF…VFAF, GALL…VTSL, FGIA…CGAV, LGGA…GGVG, GLYG…LMIG, MTAV…AVAL, LLLA…VLAI, and LFVV…YVPA.

It belongs to the KdpA family. In terms of assembly, the system is composed of three essential subunits: KdpA, KdpB and KdpC.

It is found in the cell inner membrane. Its function is as follows. Part of the high-affinity ATP-driven potassium transport (or Kdp) system, which catalyzes the hydrolysis of ATP coupled with the electrogenic transport of potassium into the cytoplasm. This subunit binds the periplasmic potassium ions and delivers the ions to the membrane domain of KdpB through an intramembrane tunnel. This Methylibium petroleiphilum (strain ATCC BAA-1232 / LMG 22953 / PM1) protein is Potassium-transporting ATPase potassium-binding subunit.